Here is a 348-residue protein sequence, read N- to C-terminus: Phosphate acyltransferase (348 aa).

Belongs to the PlsX family. In terms of assembly, homodimer. Probably interacts with PlsY.

It localises to the cytoplasm. It catalyses the reaction a fatty acyl-[ACP] + phosphate = an acyl phosphate + holo-[ACP]. The protein operates within lipid metabolism; phospholipid metabolism. In terms of biological role, catalyzes the reversible formation of acyl-phosphate (acyl-PO(4)) from acyl-[acyl-carrier-protein] (acyl-ACP). This enzyme utilizes acyl-ACP as fatty acyl donor, but not acyl-CoA. This is Phosphate acyltransferase from Rhizobium rhizogenes (strain K84 / ATCC BAA-868) (Agrobacterium radiobacter).